A 431-amino-acid polypeptide reads, in one-letter code: MDKFWWHAAWGLCLLPLSLAQQQIDLNITCRYAGVFHVEKNGRYSISRTEAADLCQAFNSTLPTMDQMVMALSKGFETCRYGFIEGHVVIPRIQPNAICAANHTGVYILTSNTSHYDTYCFNASAPLEEDCTSVTDLPNSFEGPVTITIVNRDGTRYSKKGEYRTHQEDIDASNTTDDDVSSGSSSEKSTSGGYVFHTYLPTIHSTADQDDPYFIGSTMATTRSGGKDGRRGGGLPKDATTSLEGYTTHYPETMENGTLTPVTPAKTGVFGETEVTVAEDSNFNVDGSLPGDQDSSMDPRGNSLTVTDGSKLTGHSSGNQDSGANTTSRPGRKPQIPEWLIVLASLLALALILAVCIAVNSRRRCGQKKKLVINSGNGKVEDRKPSELNGEASKSQEMVHLVNKEPSETPDQFMTADETRNLQNVDMKIGV.

Residues 1-22 form the signal peptide; sequence MDKFWWHAAWGLCLLPLSLAQQ. Over 23–338 the chain is Extracellular; the sequence is QIDLNITCRY…RPGRKPQIPE (316 aa). The N-linked (GlcNAc...) asparagine glycan is linked to N27. Disulfide bonds link C30/C131, C55/C120, and C79/C99. The region spanning 34–122 is the Link domain; sequence GVFHVEKNGR…TSHYDTYCFN (89 aa). R43 contributes to the hyaluronan binding site. A glycan (N-linked (GlcNAc...) asparagine) is linked at N59. Residues R80 and Y81 each contribute to the hyaluronan site. N102 carries N-linked (GlcNAc...) asparagine glycosylation. Hyaluronan is bound at residue Y107. Residues N112 and N122 are each glycosylated (N-linked (GlcNAc...) asparagine). Positions 158 to 169 are enriched in basic and acidic residues; sequence SKKGEYRTHQED. 2 disordered regions span residues 158–191 and 219–243; these read SKKG…KSTS and MATT…TTSL. A glycan (N-linked (GlcNAc...) asparagine) is linked at N174. Residues 181-191 are compositionally biased toward low complexity; it reads SSGSSSEKSTS. S182 is a glycosylation site (O-linked (Xyl...) (chondroitin sulfate) serine). The interval 226-338 is stem; it reads GKDGRRGGGL…RPGRKPQIPE (113 aa). 2 N-linked (GlcNAc...) asparagine glycosylation sites follow: N256 and N325. The disordered stretch occupies residues 279-333; sequence EDSNFNVDGSLPGDQDSSMDPRGNSLTVTDGSKLTGHSSGNQDSGANTTSRPGRK. Over residues 302–329 the composition is skewed to polar residues; that stretch reads NSLTVTDGSKLTGHSSGNQDSGANTTSR. A helical membrane pass occupies residues 339–359; that stretch reads WLIVLASLLALALILAVCIAV. Residues 360-431 lie on the Cytoplasmic side of the membrane; it reads NSRRRCGQKK…LQNVDMKIGV (72 aa). A Phosphoserine; by PKC modification is found at S361. The required for interaction with EZR, MSN and RDX and for co-localization to microvilli stretch occupies residues 362–380; sequence RRRCGQKKKLVINSGNGKV. S375, S386, and S395 each carry phosphoserine. Positions 376 to 396 are disordered; the sequence is GNGKVEDRKPSELNGEASKSQ.

Interacts with PKN2. Interacts with TIAM1 and TIAM2. Interacts with HA, as well as other glycosaminoglycans, collagen, laminin, and fibronectin via its N-terminal segment. Interacts with UNC119. Interacts with PDPN (via extracellular domain); this interaction is required for PDPN-mediated directional migration and regulation of lamellipodia extension/stabilization during cell spreading and migration. Interacts with RDX, EZR and MSN. Interacts with EGFR. Interacts with CD74; this complex is essential for the MIF-induced signaling cascade that results in B cell survival. Post-translationally, N-glycosylated. In terms of processing, O-glycosylated; contains chondroitin sulfate glycans which can be more or less sulfated. Phosphorylated; activation of PKC results in the dephosphorylation of Ser-395 (constitutive phosphorylation site), and the phosphorylation of Ser-361.

It is found in the cell membrane. Its subcellular location is the cell projection. It localises to the microvillus. The protein resides in the secreted. Functionally, cell-surface receptor that plays a role in cell-cell interactions, cell adhesion and migration, helping them to sense and respond to changes in the tissue microenvironment. Participates thereby in a wide variety of cellular functions including the activation, recirculation and homing of T-lymphocytes, hematopoiesis, inflammation and response to bacterial infection. Engages, through its ectodomain, extracellular matrix components such as hyaluronan/HA, collagen, growth factors, cytokines or proteases and serves as a platform for signal transduction by assembling, via its cytoplasmic domain, protein complexes containing receptor kinases and membrane proteases. Such effectors include PKN2, the RhoGTPases RAC1 and RHOA, Rho-kinases and phospholipase C that coordinate signaling pathways promoting calcium mobilization and actin-mediated cytoskeleton reorganization essential for cell migration and adhesion. This is CD44 antigen (CD44) from Mesocricetus auratus (Golden hamster).